The chain runs to 403 residues: Alkaline protease 1 (403 aa).

The first 21 residues, methionine 1–alanine 21, serve as a signal peptide directing secretion. A propeptide spanning residues proline 22–serine 124 is cleaved from the precursor. Positions lysine 35 to isoleucine 119 constitute an Inhibitor I9 domain. The Peptidase S8 domain occupies proline 129–glutamate 403. Catalysis depends on charge relay system residues aspartate 161 and histidine 192. Asparagine 252 is a glycosylation site (N-linked (GlcNAc...) asparagine). Serine 348 acts as the Charge relay system in catalysis.

The protein belongs to the peptidase S8 family.

Its subcellular location is the secreted. The catalysed reaction is Hydrolysis of proteins with broad specificity, and of Bz-Arg-OEt &gt; Ac-Tyr-OEt. Does not hydrolyze peptide amides.. Its function is as follows. Secreted alkaline protease that allows assimilation of proteinaceous substrates. This is Alkaline protease 1 (alp1) from Emericella nidulans (strain FGSC A4 / ATCC 38163 / CBS 112.46 / NRRL 194 / M139) (Aspergillus nidulans).